A 150-amino-acid chain; its full sequence is uncharacterized protein (150 aa).

The region spanning 4–149 (IQIRNYQPGD…TNFYMRYKPQ (146 aa)) is the N-acetyltransferase domain.

This sequence belongs to the acetyltransferase family.

This is an uncharacterized protein from Escherichia coli (strain K12).